The chain runs to 205 residues: Large ribosomal subunit protein bL9 (205 aa).

Positions 160–205 are disordered; it reads RDRKSRNAAAASEVQDAPVEDGGDEVVSVDSVAAEDGGADASGGTA. Over residues 184-195 the composition is skewed to low complexity; the sequence is EVVSVDSVAAED.

It belongs to the bacterial ribosomal protein bL9 family.

Binds to the 23S rRNA. The chain is Large ribosomal subunit protein bL9 from Anaplasma phagocytophilum (strain HZ).